The sequence spans 452 residues: Mitochondrial distribution and morphology protein 10 (452 aa).

A disordered region spans residues proline 105–proline 130.

This sequence belongs to the MDM10 family. As to quaternary structure, component of the ER-mitochondria encounter structure (ERMES) or MDM complex, composed of MMM1, MDM10, MDM12 and MDM34. Associates with the mitochondrial outer membrane sorting assembly machinery SAM(core) complex.

The protein localises to the mitochondrion outer membrane. In terms of biological role, component of the ERMES/MDM complex, which serves as a molecular tether to connect the endoplasmic reticulum and mitochondria. Components of this complex are involved in the control of mitochondrial shape and protein biogenesis and may function in phospholipid exchange. MDM10 is involved in the late assembly steps of the general translocase of the mitochondrial outer membrane (TOM complex). Functions in the TOM40-specific route of the assembly of outer membrane beta-barrel proteins, including the association of TOM40 with the receptor TOM22 and small TOM proteins. Can associate with the SAM(core) complex as well as the MDM12-MMM1 complex, both involved in late steps of the major beta-barrel assembly pathway, that is responsible for biogenesis of all outer membrane beta-barrel proteins. May act as a switch that shuttles between both complexes and channels precursor proteins into the TOM40-specific pathway. Plays a role in mitochondrial morphology and in the inheritance of mitochondria. The polypeptide is Mitochondrial distribution and morphology protein 10 (Uncinocarpus reesii (strain UAMH 1704)).